Reading from the N-terminus, the 455-residue chain is Probable xyloglucan galactosyltransferase GT17 (455 aa).

Over 1–34 the chain is Cytoplasmic; that stretch reads MTFNKRQVKINHWPEKNDKEKQKYSKNRETVKLT. A helical; Signal-anchor for type II membrane protein transmembrane segment spans residues 35 to 55; that stretch reads LLTLLLLCSICFLFLTLNFPF. Residues 56–455 are Lumenal-facing; it reads TIEFTASIPR…QARDNVVVSL (400 aa). 5 N-linked (GlcNAc...) asparagine glycosylation sites follow: Asn-70, Asn-169, Asn-230, Asn-390, and Asn-426.

Belongs to the glycosyltransferase 47 family. As to expression, expressed in roots and hypocotyls.

The protein resides in the golgi apparatus membrane. Functionally, functions in xyloglucan synthesis by adding side chains to the xylosylated glucan backbone. Involved in the galactosylation of hemicellulose xyloglucan. The chain is Probable xyloglucan galactosyltransferase GT17 from Arabidopsis thaliana (Mouse-ear cress).